The primary structure comprises 188 residues: Ribosome maturation factor RimM (188 aa).

Residues 103–177 (EEGWYYADLI…RVVIDPPAGT (75 aa)) enclose the PRC barrel domain.

This sequence belongs to the RimM family. As to quaternary structure, binds ribosomal protein uS19.

Its subcellular location is the cytoplasm. Functionally, an accessory protein needed during the final step in the assembly of 30S ribosomal subunit, possibly for assembly of the head region. Essential for efficient processing of 16S rRNA. May be needed both before and after RbfA during the maturation of 16S rRNA. It has affinity for free ribosomal 30S subunits but not for 70S ribosomes. This is Ribosome maturation factor RimM from Parvibaculum lavamentivorans (strain DS-1 / DSM 13023 / NCIMB 13966).